The sequence spans 341 residues: tRNA N6-adenosine threonylcarbamoyltransferase (341 aa).

Histidine 115 and histidine 119 together coordinate Fe cation. Residues 137-141 (IVSGG), aspartate 170, glycine 183, aspartate 187, and asparagine 276 contribute to the substrate site. Residue aspartate 304 participates in Fe cation binding.

The protein belongs to the KAE1 / TsaD family. It depends on Fe(2+) as a cofactor.

It localises to the cytoplasm. It catalyses the reaction L-threonylcarbamoyladenylate + adenosine(37) in tRNA = N(6)-L-threonylcarbamoyladenosine(37) in tRNA + AMP + H(+). Its function is as follows. Required for the formation of a threonylcarbamoyl group on adenosine at position 37 (t(6)A37) in tRNAs that read codons beginning with adenine. Is involved in the transfer of the threonylcarbamoyl moiety of threonylcarbamoyl-AMP (TC-AMP) to the N6 group of A37, together with TsaE and TsaB. TsaD likely plays a direct catalytic role in this reaction. The chain is tRNA N6-adenosine threonylcarbamoyltransferase from Staphylococcus aureus (strain JH1).